Consider the following 471-residue polypeptide: UDP-N-acetylmuramate--L-alanine ligase (471 aa).

125–131 (GTHGKTT) serves as a coordination point for ATP.

This sequence belongs to the MurCDEF family.

It localises to the cytoplasm. It carries out the reaction UDP-N-acetyl-alpha-D-muramate + L-alanine + ATP = UDP-N-acetyl-alpha-D-muramoyl-L-alanine + ADP + phosphate + H(+). It participates in cell wall biogenesis; peptidoglycan biosynthesis. Functionally, cell wall formation. This is UDP-N-acetylmuramate--L-alanine ligase from Kineococcus radiotolerans (strain ATCC BAA-149 / DSM 14245 / SRS30216).